A 357-amino-acid chain; its full sequence is Alanine racemase (357 aa).

The Proton acceptor; specific for D-alanine role is filled by Lys33. At Lys33 the chain carries N6-(pyridoxal phosphate)lysine. Arg129 serves as a coordination point for substrate. Tyr253 serves as the catalytic Proton acceptor; specific for L-alanine. Met301 contacts substrate.

It belongs to the alanine racemase family. Requires pyridoxal 5'-phosphate as cofactor.

The enzyme catalyses L-alanine = D-alanine. Its pathway is amino-acid biosynthesis; D-alanine biosynthesis; D-alanine from L-alanine: step 1/1. Catalyzes the interconversion of L-alanine and D-alanine. May also act on other amino acids. This Pseudomonas fluorescens (strain ATCC BAA-477 / NRRL B-23932 / Pf-5) protein is Alanine racemase (alr).